The sequence spans 149 residues: Ribonuclease H (149 aa).

The region spanning 1–143 (MNAVEIYTDG…ADMLANRGVE (143 aa)) is the RNase H type-1 domain. Asp-9, Glu-47, Asp-69, and Asp-135 together coordinate Mg(2+).

The protein belongs to the RNase H family. As to quaternary structure, monomer. Requires Mg(2+) as cofactor.

The protein resides in the cytoplasm. The catalysed reaction is Endonucleolytic cleavage to 5'-phosphomonoester.. Endonuclease that specifically degrades the RNA of RNA-DNA hybrids. The polypeptide is Ribonuclease H (Albidiferax ferrireducens (strain ATCC BAA-621 / DSM 15236 / T118) (Rhodoferax ferrireducens)).